The chain runs to 301 residues: MADLIPLIATDSLPSNRARRPEWLKVRAPGGANYHDVFRLMREQNLHTVCEEAHCPNIGECWNHRTATFLLLGNICTRGCRYCAIGKGKPEPIDEHEPERVAASVAHLKLKFAVLTSVNRDDVPDGGASIFARTIELIRQKAPDCKVEVLIPDFDGNWEALETVLAAEPDVLNHNIETVPRLFRRFRPRARFEQSIELLARARAARPYLVTKSGMMVGAGETNEEVYQVIDRLRDVDVNVLTIGQYLSPGASYWPVDRYVTPAEFAEFRRYALERGFRHVESGPLVRSSYHAHLHVNAQQH.

C50, C55, C61, C76, C80, C83, and S289 together coordinate [4Fe-4S] cluster. The region spanning 62 to 278 (WNHRTATFLL…RRYALERGFR (217 aa)) is the Radical SAM core domain.

Belongs to the radical SAM superfamily. Lipoyl synthase family. It depends on [4Fe-4S] cluster as a cofactor.

Its subcellular location is the cytoplasm. The catalysed reaction is [[Fe-S] cluster scaffold protein carrying a second [4Fe-4S](2+) cluster] + N(6)-octanoyl-L-lysyl-[protein] + 2 oxidized [2Fe-2S]-[ferredoxin] + 2 S-adenosyl-L-methionine + 4 H(+) = [[Fe-S] cluster scaffold protein] + N(6)-[(R)-dihydrolipoyl]-L-lysyl-[protein] + 4 Fe(3+) + 2 hydrogen sulfide + 2 5'-deoxyadenosine + 2 L-methionine + 2 reduced [2Fe-2S]-[ferredoxin]. Its pathway is protein modification; protein lipoylation via endogenous pathway; protein N(6)-(lipoyl)lysine from octanoyl-[acyl-carrier-protein]: step 2/2. In terms of biological role, catalyzes the radical-mediated insertion of two sulfur atoms into the C-6 and C-8 positions of the octanoyl moiety bound to the lipoyl domains of lipoate-dependent enzymes, thereby converting the octanoylated domains into lipoylated derivatives. The sequence is that of Lipoyl synthase from Roseiflexus sp. (strain RS-1).